Here is an 86-residue protein sequence, read N- to C-terminus: Protein Tat (86 aa).

The tract at residues 1 to 24 is interaction with human CREBBP; that stretch reads MDPVDPNQEPWNHPGSQPRTACNN. The tract at residues 1–48 is transactivation; sequence MDPVDPNQEPWNHPGSQPRTACNNCYCKKCCYHCQLCFLKKGLGIYYG. Zn(2+) is bound by residues cysteine 22, cysteine 25, and cysteine 27. The segment at 22–37 is cysteine-rich; it reads CNNCYCKKCCYHCQLC. N6-acetyllysine; by host PCAF is present on lysine 28. Zn(2+) contacts are provided by cysteine 30, histidine 33, cysteine 34, and cysteine 37. Residues 38 to 48 are core; it reads FLKKGLGIYYG. Over residues 48 to 58 the composition is skewed to basic residues; the sequence is GRKKRRQRRGT. The segment at 48–86 is disordered; the sequence is GRKKRRQRRGTPKSLQDHQTLIPKQPLSRTSGDPTGPEK. The Nuclear localization signal, RNA-binding (TAR), and protein transduction motif lies at 49 to 57; it reads RKKRRQRRG. Residues 49–86 form an interaction with the host capping enzyme RNGTT region; that stretch reads RKKRRQRRGTPKSLQDHQTLIPKQPLSRTSGDPTGPEK. An N6-acetyllysine; by host EP300 and GCN5L2 mark is found at lysine 50 and lysine 51. An asymmetric dimethylarginine; by host PRMT6 mark is found at arginine 52 and arginine 53. Lysine 71 is covalently cross-linked (Glycyl lysine isopeptide (Lys-Gly) (interchain with G-Cter in ubiquitin)).

It belongs to the lentiviruses Tat family. As to quaternary structure, interacts with host CCNT1. Associates with the P-TEFb complex composed at least of Tat, P-TEFb (CDK9 and CCNT1), TAR RNA, RNA Pol II. Recruits the HATs CREBBP, TAF1/TFIID, EP300, PCAF and GCN5L2. Interacts with host KAT5/Tip60; this interaction targets the latter to degradation. Interacts with the host deacetylase SIRT1. Interacts with host capping enzyme RNGTT; this interaction stimulates RNGTT. Binds to host KDR, and to the host integrins ITGAV/ITGB3 and ITGA5/ITGB1. Interacts with host KPNB1/importin beta-1 without previous binding to KPNA1/importin alpha-1. Interacts with EIF2AK2. Interacts with host nucleosome assembly protein NAP1L1; this interaction may be required for the transport of Tat within the nucleus, since the two proteins interact at the nuclear rim. Interacts with host C1QBP/SF2P32; this interaction involves lysine-acetylated Tat. Interacts with the host chemokine receptors CCR2, CCR3 and CXCR4. Interacts with host DPP4/CD26; this interaction may trigger an anti-proliferative effect. Interacts with host LDLR. Interacts with the host extracellular matrix metalloproteinase MMP1. Interacts with host PRMT6; this interaction mediates Tat's methylation. Interacts with, and is ubiquitinated by MDM2/Hdm2. Interacts with host PSMC3 and HTATIP2. Interacts with STAB1; this interaction may overcome SATB1-mediated repression of IL2 and IL2RA (interleukin) in T cells by binding to the same domain than HDAC1. Interacts (when acetylated) with human CDK13, thereby increasing HIV-1 mRNA splicing and promoting the production of the doubly spliced HIV-1 protein Nef. Interacts with host TBP; this interaction modulates the activity of transcriptional pre-initiation complex. Interacts with host RELA. Interacts with host PLSCR1; this interaction negatively regulates Tat transactivation activity by altering its subcellular distribution. Post-translationally, asymmetrical arginine methylation by host PRMT6 seems to diminish the transactivation capacity of Tat and affects the interaction with host CCNT1. In terms of processing, acetylation by EP300, CREBBP, GCN5L2/GCN5 and PCAF regulates the transactivation activity of Tat. EP300-mediated acetylation of Lys-50 promotes dissociation of Tat from the TAR RNA through the competitive binding to PCAF's bromodomain. In addition, the non-acetylated Tat's N-terminus can also interact with PCAF. PCAF-mediated acetylation of Lys-28 enhances Tat's binding to CCNT1. Lys-50 is deacetylated by SIRT1. Polyubiquitination by host MDM2 does not target Tat to degradation, but activates its transactivation function and fosters interaction with CCNT1 and TAR RNA. Post-translationally, phosphorylated by EIF2AK2 on serine and threonine residues adjacent to the basic region important for TAR RNA binding and function. Phosphorylation of Tat by EIF2AK2 is dependent on the prior activation of EIF2AK2 by dsRNA.

The protein localises to the host nucleus. It localises to the host nucleolus. It is found in the host cytoplasm. Its subcellular location is the secreted. Transcriptional activator that increases RNA Pol II processivity, thereby increasing the level of full-length viral transcripts. Recognizes a hairpin structure at the 5'-LTR of the nascent viral mRNAs referred to as the transactivation responsive RNA element (TAR) and recruits the cyclin T1-CDK9 complex (P-TEFb complex) that will in turn hyperphosphorylate the RNA polymerase II to allow efficient elongation. The CDK9 component of P-TEFb and other Tat-activated kinases hyperphosphorylate the C-terminus of RNA Pol II that becomes stabilized and much more processive. Other factors such as HTATSF1/Tat-SF1, SUPT5H/SPT5, and HTATIP2 are also important for Tat's function. Besides its effect on RNA Pol II processivity, Tat induces chromatin remodeling of proviral genes by recruiting the histone acetyltransferases (HATs) CREBBP, EP300 and PCAF to the chromatin. This also contributes to the increase in proviral transcription rate, especially when the provirus integrates in transcriptionally silent region of the host genome. To ensure maximal activation of the LTR, Tat mediates nuclear translocation of NF-kappa-B by interacting with host RELA. Through its interaction with host TBP, Tat may also modulate transcription initiation. Tat can reactivate a latently infected cell by penetrating in it and transactivating its LTR promoter. In the cytoplasm, Tat is thought to act as a translational activator of HIV-1 mRNAs. Functionally, extracellular circulating Tat can be endocytosed by surrounding uninfected cells via the binding to several surface receptors such as CD26, CXCR4, heparan sulfate proteoglycans (HSPG) or LDLR. Neurons are rarely infected, but they internalize Tat via their LDLR. Through its interaction with nuclear HATs, Tat is potentially able to control the acetylation-dependent cellular gene expression. Modulates the expression of many cellular genes involved in cell survival, proliferation or in coding for cytokines or cytokine receptors. Tat plays a role in T-cell and neurons apoptosis. Tat induced neurotoxicity and apoptosis probably contribute to neuroAIDS. Circulating Tat also acts as a chemokine-like and/or growth factor-like molecule that binds to specific receptors on the surface of the cells, affecting many cellular pathways. In the vascular system, Tat binds to ITGAV/ITGB3 and ITGA5/ITGB1 integrins dimers at the surface of endothelial cells and competes with bFGF for heparin-binding sites, leading to an excess of soluble bFGF. This chain is Protein Tat, found in Human immunodeficiency virus type 1 group M subtype H (isolate VI991) (HIV-1).